We begin with the raw amino-acid sequence, 305 residues long: Superkiller complex protein 8 (305 aa).

Position 1 is an N-acetylmethionine (methionine 1). The residue at position 2 (threonine 2) is an N-acetylthreonine; in WD repeat-containing protein 61, N-terminally processed. 7 WD repeats span residues alanine 14–glutamine 57, glycine 62–serine 101, alanine 104–serine 143, threonine 146–glutamate 187, glycine 188–threonine 227, glycine 230–threonine 269, and aspartate 272–isoleucine 305.

This sequence belongs to the SKI8 family. Component of the PAF1 complex, which consists of CDC73, PAF1, LEO1, CTR9, RTF1 and SKIC8. The PAF1 complex interacts with PHF5A. Within the PAF1 complex interacts directly with PHF5A. Component of the SKI complex which consists of SKIC2, SKIC3 and SKIC8.

It is found in the nucleus. It localises to the cytoplasm. Its function is as follows. Component of the PAF1 complex (PAF1C) which has multiple functions during transcription by RNA polymerase II and is implicated in regulation of development and maintenance of embryonic stem cell pluripotency. PAF1C associates with RNA polymerase II through interaction with POLR2A CTD non-phosphorylated and 'Ser-2'- and 'Ser-5'-phosphorylated forms and is involved in transcriptional elongation, acting both independently and synergistically with TCEA1 and in cooperation with the DSIF complex and HTATSF1. PAF1C is required for transcription of Hox and Wnt target genes. PAF1C is involved in hematopoiesis and stimulates transcriptional activity of KMT2A/MLL1; it promotes leukemogenesis through association with KMT2A/MLL1-rearranged oncoproteins, such as KMT2A/MLL1-MLLT3/AF9 and KMT2A/MLL1-MLLT1/ENL. PAF1C is involved in histone modifications such as ubiquitination of histone H2B and methylation on histone H3 'Lys-4' (H3K4me3). PAF1C recruits the RNF20/40 E3 ubiquitin-protein ligase complex and the E2 enzyme UBE2A or UBE2B to chromatin which mediate monoubiquitination of 'Lys-120' of histone H2B (H2BK120ub1); UB2A/B-mediated H2B ubiquitination is proposed to be coupled to transcription. PAF1C is involved in mRNA 3' end formation probably through association with cleavage and poly(A) factors. In case of infection by influenza A strain H3N2, PAF1C associates with viral NS1 protein, thereby regulating gene transcription. Required for mono- and trimethylation on histone H3 'Lys-4' (H3K4me3), dimethylation on histone H3 'Lys-79' (H3K4me3). Required for Hox gene transcription. Also acts as a component of the SKI complex, a multiprotein complex that assists the RNA-degrading exosome during the mRNA decay and quality-control pathways. The SKI complex catalyzes mRNA extraction from 80S ribosomal complexes in the 3'-5' direction and channels mRNA to the cytosolic exosome for degradation. SKI-mediated extraction of mRNA from stalled ribosomes allow binding of the Pelota-HBS1L complex and subsequent ribosome disassembly by ABCE1 for ribosome recycling. The protein is Superkiller complex protein 8 (Skic8) of Mus musculus (Mouse).